We begin with the raw amino-acid sequence, 749 residues long: Catalase-peroxidase 2 (749 aa).

Positions methionine 1–alanine 27 are cleaved as a signal peptide. The tryptophyl-tyrosyl-methioninium (Trp-Tyr) (with M-255) cross-link spans tryptophan 107–tyrosine 229. The Proton acceptor role is filled by histidine 108. Positions tyrosine 229–methionine 255 form a cross-link, tryptophyl-tyrosyl-methioninium (Tyr-Met) (with W-107). Position 270 (histidine 270) interacts with heme b.

The protein belongs to the peroxidase family. Peroxidase/catalase subfamily. As to quaternary structure, homodimer or homotetramer. The cofactor is heme b. Formation of the three residue Trp-Tyr-Met cross-link is important for the catalase, but not the peroxidase activity of the enzyme.

The enzyme catalyses H2O2 + AH2 = A + 2 H2O. The catalysed reaction is 2 H2O2 = O2 + 2 H2O. In terms of biological role, bifunctional enzyme with both catalase and broad-spectrum peroxidase activity. The sequence is that of Catalase-peroxidase 2 from Legionella pneumophila (strain Lens).